Reading from the N-terminus, the 142-residue chain is Hemoglobin subunit alpha (142 aa).

Residues Val2–Arg142 enclose the Globin domain. His60 lines the O2 pocket. Position 89 (His89) interacts with heme b.

This sequence belongs to the globin family. Heterotetramer of two alpha chains and two beta chains. As to expression, red blood cells.

Involved in oxygen transport from gills to the various peripheral tissues. In Hemitrygon akajei (Red stingray), this protein is Hemoglobin subunit alpha (hba).